A 464-amino-acid chain; its full sequence is MSSEKTNQSWGGRFSEPVDAFVARFTASVEFDKRLYRHDIMGSIAHASMLAKVGVLTDAERDAIEGGLKQIQGEIEAGQFDWRVDLEDVHMNIEARLTDRIGVTGKKLHTGRSRNDQVATDIRLWLRDEIDVILAEITRLQQGLLGLAEAEADTIMPGFTHLQTAQPVTFGHHLLAWFEMLSRDYERLVDCRKRTNRMPLGSAALAGTTYPIQREITAELLGFDAVGGNSLDGVSDRDFAIEFCAAASLAMMHLSRFSEELVLWTSAQFQFIDLPDRFCTGSSIMPQKKNPDVPELVRGKTGRVFGALTGLLTLMKGQPLAYNKDNQEDKEPLFDAADTLRDSLRAFADMVPAIKPKREIMREAALRGFSTATDLADYLVRKGLPFRDCHEIVGHAVKYGVHSGKDLAEMSLDELRQFSDQIDDDVFAVLTLEGSVGARDHIGGTAPNQVRAAVARGRELLSAR.

Belongs to the lyase 1 family. Argininosuccinate lyase subfamily.

The protein localises to the cytoplasm. The catalysed reaction is 2-(N(omega)-L-arginino)succinate = fumarate + L-arginine. The protein operates within amino-acid biosynthesis; L-arginine biosynthesis; L-arginine from L-ornithine and carbamoyl phosphate: step 3/3. The chain is Argininosuccinate lyase from Ectopseudomonas mendocina (strain ymp) (Pseudomonas mendocina).